A 123-amino-acid chain; its full sequence is Heat-labile enterotoxin IIA, B chain (123 aa).

Residues 1 to 19 form the signal peptide; the sequence is MSSKKIIGAFVLMTGILSG. C33 and C104 are oxidised to a cystine.

As to quaternary structure, heterohexamer of one A chain and of five B chains.

Functionally, the biological activity of the toxin is produced by the A chain, which activates intracellular adenyl cyclase. The sequence is that of Heat-labile enterotoxin IIA, B chain from Escherichia coli.